Consider the following 271-residue polypeptide: MPELPEVEVTRQGISPHLLDQQVTGLTVRNASLRWPVPEVAQQIVGQTIRGIRRRAKYLLLDTDAGTTIVHLGMSGSLRILPKSTPVEKHDHIDLELASGKVLRFNDPRRFGAWLWCELPEAAHPLLAKLGPEPLQSGFNVDYLAKALEGKKKAVKLCLMDNHIVVGVGNIYANEALFAAGIHPQTEAGRIDRERLTVLVAEVKQILAQAIKQGGTTLKDFTNADGKPGYFAQKLHVYGRGGETCTQCGNLLSEIKLGQRATVFCGLCQPR.

Proline 2 acts as the Schiff-base intermediate with DNA in catalysis. The active-site Proton donor is the glutamate 3. Lysine 57 serves as the catalytic Proton donor; for beta-elimination activity. Histidine 90, arginine 109, and lysine 151 together coordinate DNA. Residues 236-270 (HVYGRGGETCTQCGNLLSEIKLGQRATVFCGLCQP) form an FPG-type zinc finger. The active-site Proton donor; for delta-elimination activity is the arginine 260.

It belongs to the FPG family. In terms of assembly, monomer. Zn(2+) serves as cofactor.

It carries out the reaction Hydrolysis of DNA containing ring-opened 7-methylguanine residues, releasing 2,6-diamino-4-hydroxy-5-(N-methyl)formamidopyrimidine.. The enzyme catalyses 2'-deoxyribonucleotide-(2'-deoxyribose 5'-phosphate)-2'-deoxyribonucleotide-DNA = a 3'-end 2'-deoxyribonucleotide-(2,3-dehydro-2,3-deoxyribose 5'-phosphate)-DNA + a 5'-end 5'-phospho-2'-deoxyribonucleoside-DNA + H(+). Involved in base excision repair of DNA damaged by oxidation or by mutagenic agents. Acts as a DNA glycosylase that recognizes and removes damaged bases. Has a preference for oxidized purines, such as 7,8-dihydro-8-oxoguanine (8-oxoG). Has AP (apurinic/apyrimidinic) lyase activity and introduces nicks in the DNA strand. Cleaves the DNA backbone by beta-delta elimination to generate a single-strand break at the site of the removed base with both 3'- and 5'-phosphates. The sequence is that of Formamidopyrimidine-DNA glycosylase from Shewanella loihica (strain ATCC BAA-1088 / PV-4).